The following is a 154-amino-acid chain: 6,7-dimethyl-8-ribityllumazine synthase (154 aa).

Residues phenylalanine 15, 47-49 (TFD), and 71-73 (AVI) each bind 5-amino-6-(D-ribitylamino)uracil. Residue 76-77 (ET) participates in (2S)-2-hydroxy-3-oxobutyl phosphate binding. The Proton donor role is filled by histidine 79. Residue leucine 104 coordinates 5-amino-6-(D-ribitylamino)uracil. Position 119 (arginine 119) interacts with (2S)-2-hydroxy-3-oxobutyl phosphate.

This sequence belongs to the DMRL synthase family.

The enzyme catalyses (2S)-2-hydroxy-3-oxobutyl phosphate + 5-amino-6-(D-ribitylamino)uracil = 6,7-dimethyl-8-(1-D-ribityl)lumazine + phosphate + 2 H2O + H(+). It functions in the pathway cofactor biosynthesis; riboflavin biosynthesis; riboflavin from 2-hydroxy-3-oxobutyl phosphate and 5-amino-6-(D-ribitylamino)uracil: step 1/2. Catalyzes the formation of 6,7-dimethyl-8-ribityllumazine by condensation of 5-amino-6-(D-ribitylamino)uracil with 3,4-dihydroxy-2-butanone 4-phosphate. This is the penultimate step in the biosynthesis of riboflavin. The chain is 6,7-dimethyl-8-ribityllumazine synthase from Saccharolobus islandicus (strain L.S.2.15 / Lassen #1) (Sulfolobus islandicus).